We begin with the raw amino-acid sequence, 233 residues long: Proteasome subunit beta type-6 (233 aa).

A propeptide spans 1–12 (MDLNLDAPHSMG) (removed in mature form). T13 acts as the Nucleophile in catalysis.

This sequence belongs to the peptidase T1B family. Component of the 20S core complex of the 26S proteasome. The 26S proteasome is composed of a core protease (CP), known as the 20S proteasome, capped at one or both ends by the 19S regulatory particle (RP/PA700). The 20S proteasome core is composed of 28 subunits that are arranged in four stacked rings, resulting in a barrel-shaped structure. The two end rings are each formed by seven alpha subunits, and the two central rings are each formed by seven beta subunits. The catalytic chamber with the active sites is on the inside of the barrel.

The protein resides in the cytoplasm. The protein localises to the nucleus. It carries out the reaction Cleavage of peptide bonds with very broad specificity.. Functionally, the proteasome is a multicatalytic proteinase complex which is characterized by its ability to cleave peptides with Arg, Phe, Tyr, Leu, and Glu adjacent to the leaving group at neutral or slightly basic pH. The proteasome has an ATP-dependent proteolytic activity. This chain is Proteasome subunit beta type-6 (PBA1), found in Arabidopsis thaliana (Mouse-ear cress).